The following is a 316-amino-acid chain: Iron-sulfur cluster assembly SufBD family protein MJ0034 (316 aa).

This sequence belongs to the iron-sulfur cluster assembly SufBD family.

The sequence is that of Iron-sulfur cluster assembly SufBD family protein MJ0034 from Methanocaldococcus jannaschii (strain ATCC 43067 / DSM 2661 / JAL-1 / JCM 10045 / NBRC 100440) (Methanococcus jannaschii).